A 262-amino-acid chain; its full sequence is Acetaldehyde dehydrogenase 7 (262 aa).

An NAD(+)-binding site is contributed by 10-13 (SGNI). Cys-128 functions as the Acyl-thioester intermediate in the catalytic mechanism. 159-167 (SAGPGTRAN) contributes to the NAD(+) binding site.

This sequence belongs to the acetaldehyde dehydrogenase family.

The catalysed reaction is acetaldehyde + NAD(+) + CoA = acetyl-CoA + NADH + H(+). This is Acetaldehyde dehydrogenase 7 from Rhodococcus jostii (strain RHA1).